A 219-amino-acid chain; its full sequence is Putative GEM-like protein 8 (219 aa).

Residues 96–174 (KIYKRLFKVS…CKINGVNQSQ (79 aa)) form the GRAM domain.

It belongs to the GEM family.

This chain is Putative GEM-like protein 8, found in Arabidopsis thaliana (Mouse-ear cress).